We begin with the raw amino-acid sequence, 608 residues long: uncharacterized protein (608 aa).

The first 38 residues, 1 to 38 (MWLQQRLKVFPGLLSSSWARRVLAVSGFLVIIYWYIFS), serve as a signal peptide directing secretion. At 39 to 563 (GSLFRSFWYA…EEHMAKQYRG (525 aa)) the chain is on the extracellular side. An N-linked (GlcNAc...) asparagine glycan is attached at Asn-337. Residues 564-584 (LPFLFWFSVASLITLFHLFLF) traverse the membrane as a helical segment. At 585–608 (KLIYNEYCGPGAKPLFRSKEDTSV) the chain is on the cytoplasmic side.

The protein resides in the membrane. This is an uncharacterized protein from Xenopus tropicalis (Western clawed frog).